The following is a 171-amino-acid chain: Co-chaperone protein HscB (171 aa).

The region spanning 2–74 (DYFTFFGLPA…LMRAEYLLSL (73 aa)) is the J domain.

The protein belongs to the HscB family. In terms of assembly, interacts with HscA and stimulates its ATPase activity. Interacts with IscU.

Its function is as follows. Co-chaperone involved in the maturation of iron-sulfur cluster-containing proteins. Seems to help targeting proteins to be folded toward HscA. The protein is Co-chaperone protein HscB of Shigella sonnei (strain Ss046).